A 192-amino-acid chain; its full sequence is Ciliary microtubule-associated protein 3 (192 aa).

In terms of assembly, interacts with proteins involved in ciliary transport, including ARL13B, CETN1, KIF3A, RAB6A, RAB8A, TUBB1 and TUBG1. Interacts with AURKA.

The protein localises to the cytoplasmic vesicle. It localises to the golgi apparatus. The protein resides in the trans-Golgi network. It is found in the cytoplasm. In terms of biological role, during primary cilia disassembly, involved in cilia disassembly. Required specifically to control cilia retraction as well as the liberation and duplication of the basal body/centrosome. May act by stimulating AURKA activity at the basal body in a cell cycle-dependent manner. The protein is Ciliary microtubule-associated protein 3 (CIMAP3) of Bos taurus (Bovine).